The chain runs to 299 residues: Lipoyl synthase 2 (299 aa).

Positions 43, 48, 54, 69, 73, 76, and 294 each coordinate [4Fe-4S] cluster. The 229-residue stretch at 55 to 283 (YAAGTATFLL…GAVARDLGFA (229 aa)) folds into the Radical SAM core domain.

The protein belongs to the radical SAM superfamily. Lipoyl synthase family. Requires [4Fe-4S] cluster as cofactor.

It is found in the cytoplasm. The enzyme catalyses [[Fe-S] cluster scaffold protein carrying a second [4Fe-4S](2+) cluster] + N(6)-octanoyl-L-lysyl-[protein] + 2 oxidized [2Fe-2S]-[ferredoxin] + 2 S-adenosyl-L-methionine + 4 H(+) = [[Fe-S] cluster scaffold protein] + N(6)-[(R)-dihydrolipoyl]-L-lysyl-[protein] + 4 Fe(3+) + 2 hydrogen sulfide + 2 5'-deoxyadenosine + 2 L-methionine + 2 reduced [2Fe-2S]-[ferredoxin]. It participates in protein modification; protein lipoylation via endogenous pathway; protein N(6)-(lipoyl)lysine from octanoyl-[acyl-carrier-protein]: step 2/2. Functionally, catalyzes the radical-mediated insertion of two sulfur atoms into the C-6 and C-8 positions of the octanoyl moiety bound to the lipoyl domains of lipoate-dependent enzymes, thereby converting the octanoylated domains into lipoylated derivatives. In Parasynechococcus marenigrum (strain WH8102), this protein is Lipoyl synthase 2.